Consider the following 538-residue polypeptide: Putative outer membrane porin BglH (538 aa).

An N-terminal signal peptide occupies residues methionine 1–alanine 25. A disordered region spans residues lysine 52 to threonine 82. Residues alanine 62–glutamine 73 are compositionally biased toward polar residues.

The protein belongs to the porin LamB (TC 1.B.3) family.

It is found in the cell outer membrane. May be a sugar porin with a broad carbohydrate specificity. The polypeptide is Putative outer membrane porin BglH (bglH) (Shigella flexneri serotype 5b (strain 8401)).